Consider the following 306-residue polypeptide: ADP,ATP carrier protein ER-ANT1 (306 aa).

Solcar repeat units follow at residues 8–101 (ERFS…FKNL), 113–205 (KWFA…IKPI), and 213–299 (GNFL…LHQI). The next 5 helical transmembrane spans lie at 10–37 (FSAD…VKLL), 78–102 (QANV…KNLL), 111–131 (YLKW…TTSL), 181–202 (FGVS…YDTI), and 216–236 (LASF…AYPF). 2 residues coordinate ADP: R83 and K95. ADP is bound at residue R240. An important for transport activity region spans residues 240–245 (RRRMML). The Nucleotide carrier signature motif signature appears at 240-245 (RRRMML). Residues 276-296 (VTANMLLGVAGAGVLAGYDQL) traverse the membrane as a helical segment.

Belongs to the mitochondrial carrier (TC 2.A.29) family.

Its subcellular location is the endoplasmic reticulum membrane. The catalysed reaction is ADP(in) + ATP(out) = ADP(out) + ATP(in). ADP:ATP antiporter that catalyzes the exchange of ADP and ATP across the endoplasmic reticulum membrane. This Arabidopsis thaliana (Mouse-ear cress) protein is ADP,ATP carrier protein ER-ANT1 (ER-ANT1).